Consider the following 85-residue polypeptide: Large ribosomal subunit protein bL27 (85 aa).

The disordered stretch occupies residues 1–20 (MAHKKGGGTTRNGRDSESKR).

This sequence belongs to the bacterial ribosomal protein bL27 family.

The polypeptide is Large ribosomal subunit protein bL27 (Herminiimonas arsenicoxydans).